We begin with the raw amino-acid sequence, 1178 residues long: DNA-directed RNA polymerase subunit beta (1178 aa).

Positions 1–37 are disordered; the sequence is MLEGCILPDFGQSKTDVSPSQSRPQSSPNNSVPGAPN. Positions 17 to 33 are enriched in low complexity; it reads VSPSQSRPQSSPNNSVP.

Belongs to the RNA polymerase beta chain family. The RNAP catalytic core consists of 2 alpha, 1 beta, 1 beta' and 1 omega subunit. When a sigma factor is associated with the core the holoenzyme is formed, which can initiate transcription.

The enzyme catalyses RNA(n) + a ribonucleoside 5'-triphosphate = RNA(n+1) + diphosphate. In terms of biological role, DNA-dependent RNA polymerase catalyzes the transcription of DNA into RNA using the four ribonucleoside triphosphates as substrates. The chain is DNA-directed RNA polymerase subunit beta from Mycobacterium leprae (strain Br4923).